A 197-amino-acid polypeptide reads, in one-letter code: FMN-dependent NADH:quinone oxidoreductase (197 aa).

FMN is bound by residues serine 10, 16-18 (SQS), 93-96 (MYNF), and 137-140 (TRGG).

The protein belongs to the azoreductase type 1 family. Homodimer. FMN serves as cofactor.

The enzyme catalyses 2 a quinone + NADH + H(+) = 2 a 1,4-benzosemiquinone + NAD(+). It carries out the reaction N,N-dimethyl-1,4-phenylenediamine + anthranilate + 2 NAD(+) = 2-(4-dimethylaminophenyl)diazenylbenzoate + 2 NADH + 2 H(+). Quinone reductase that provides resistance to thiol-specific stress caused by electrophilic quinones. In terms of biological role, also exhibits azoreductase activity. Catalyzes the reductive cleavage of the azo bond in aromatic azo compounds to the corresponding amines. This is FMN-dependent NADH:quinone oxidoreductase from Shewanella loihica (strain ATCC BAA-1088 / PV-4).